Consider the following 280-residue polypeptide: Bis(5'-nucleosyl)-tetraphosphatase, symmetrical (280 aa).

This sequence belongs to the Ap4A hydrolase family.

It carries out the reaction P(1),P(4)-bis(5'-adenosyl) tetraphosphate + H2O = 2 ADP + 2 H(+). In terms of biological role, hydrolyzes diadenosine 5',5'''-P1,P4-tetraphosphate to yield ADP. In Shigella flexneri serotype 5b (strain 8401), this protein is Bis(5'-nucleosyl)-tetraphosphatase, symmetrical.